A 235-amino-acid chain; its full sequence is Small ribosomal subunit protein uS3 (235 aa).

Residues 39 to 107 form the KH type-2 domain; that stretch reads VRKFLNKELA…PAQINIAEVK (69 aa). The disordered stretch occupies residues 215 to 235; the sequence is AQSEQQPADKPKKAPRGKGRK.

The protein belongs to the universal ribosomal protein uS3 family. Part of the 30S ribosomal subunit. Forms a tight complex with proteins S10 and S14.

Binds the lower part of the 30S subunit head. Binds mRNA in the 70S ribosome, positioning it for translation. The chain is Small ribosomal subunit protein uS3 from Haemophilus influenzae (strain ATCC 51907 / DSM 11121 / KW20 / Rd).